A 599-amino-acid chain; its full sequence is Cytadherence high molecular weight protein 3 (599 aa).

The segment covering 220–236 (VQVDSGSQNHSFNNSPS) has biased composition (polar residues). The tract at residues 220–241 (VQVDSGSQNHSFNNSPSLKPPL) is disordered.

The protein resides in the cell projection. It is found in the attachment organelle membrane. Its function is as follows. Component of the cytoskeleton-like structure which stabilizes the shape of the wall-less mycoplasma. This cytoskeleton-like network of accessory proteins containing HMW proteins 1 to 5 allows the proper anchoring of cytadhesin proteins in the mycoplasmal membrane at the attachment organelle. Essential for successful surface parasitism. This is Cytadherence high molecular weight protein 3 (hmw3) from Mycoplasma genitalium (strain ATCC 33530 / DSM 19775 / NCTC 10195 / G37) (Mycoplasmoides genitalium).